The following is a 266-amino-acid chain: UPF0354 protein lwe1624 (266 aa).

This sequence belongs to the UPF0354 family.

This is UPF0354 protein lwe1624 from Listeria welshimeri serovar 6b (strain ATCC 35897 / DSM 20650 / CCUG 15529 / CIP 8149 / NCTC 11857 / SLCC 5334 / V8).